A 375-amino-acid chain; its full sequence is Serine protease 23 (375 aa).

The N-terminal stretch at 1–23 is a signal peptide; sequence MAGTPGHPIFLLLLLRAIGQVSP. N-linked (GlcNAc...) asparagine glycosylation is present at N93. Cysteines 153 and 169 form a disulfide. H168 functions as the Charge relay system in the catalytic mechanism. Residue N199 is glycosylated (N-linked (GlcNAc...) asparagine). Catalysis depends on charge relay system residues D232 and S308.

The protein belongs to the peptidase S1 family.

Its subcellular location is the secreted. The chain is Serine protease 23 (PRSS23) from Bos taurus (Bovine).